A 1061-amino-acid chain; its full sequence is Ceruloplasmin (1061 aa).

A signal peptide spans 1–19 (MKFLLLSTFIFLYSSLALA). Plastocyanin-like domains lie at 20 to 199 (RDKH…LILC), 208 to 356 (KEKN…VRDC), 369 to 555 (HVRH…MKIC), 565 to 713 (RQKD…VNQC), 725 to 895 (GERT…LIVC), and 903 to 1057 (FSPK…VEQE). The Na(+) site is built by Tyr55, Gly64, and Tyr67. 2 residues coordinate Cu(2+): His120 and His122. His120 provides a ligand contact to O2. Lys128 serves as a coordination point for Ca(2+). The N-linked (GlcNAc...) asparagine glycan is linked to Asn138. 3 residues coordinate Ca(2+): Gln143, Asp146, and Asp147. A disulfide bond links Cys173 and Cys199. Cu(2+) contacts are provided by His179 and His181. His179 lines the O2 pocket. Asn226 carries N-linked (GlcNAc...) asparagine glycosylation. Ser255 serves as a coordination point for Na(+). A disulfide bond links Cys275 and Cys356. Cu(2+)-binding residues include His294, Cys337, and His342. The N-linked (GlcNAc...) asparagine glycan is linked to Asn396. Phe407, Gly416, and Tyr419 together coordinate Na(+). Cys529 and Cys555 are disulfide-bonded. A glycan (N-linked (GlcNAc...) asparagine) is linked at Asn583. Ser612 lines the Na(+) pocket. Cys632 and Cys713 are oxidised to a cystine. Residues His651, Cys694, His699, and Met704 each contribute to the Cu(2+) site. The active-site Nucleophile; for glutathione peroxidase activity is Cys694. N-linked (GlcNAc...) asparagine glycosylation is present at Asn757. Residues Phe762, Gly771, and Tyr774 each coordinate Na(+). A disulfide bridge connects residues Cys869 and Cys895. The N-linked (GlcNAc...) asparagine glycan is linked to Asn921. Ser950 lines the Na(+) pocket. Positions 989, 992, 994, 1034, 1035, 1036, 1040, and 1045 each coordinate Cu(2+). Residues His992 and His994 each contribute to the O2 site. His1036 is an O2 binding site.

The protein belongs to the multicopper oxidase family. Found in a complex with MPO and LTF; interacts directly with MPO and LTF, which allows Fe(3+) incorporation into LTF, activation of CP ferroxidase activity and protection of CP antioxidant properties by MPO. Cu(2+) is required as a cofactor. Expressed in many tissues, including liver, eye and brain.

Its subcellular location is the secreted. It catalyses the reaction 4 Fe(2+) + O2 + 4 H(+) = 4 Fe(3+) + 2 H2O. It carries out the reaction 4 Cu(+) + O2 + 4 H(+) = 4 Cu(2+) + 2 H2O. The catalysed reaction is a hydroperoxide + 2 glutathione = an alcohol + glutathione disulfide + H2O. The enzyme catalyses 4 nitric oxide + O2 + 2 H2O = 4 nitrite + 4 H(+). It catalyses the reaction 2 glutathione + H2O2 = glutathione disulfide + 2 H2O. Multifunctional blue, copper-binding (6-7 atoms per molecule) glycoprotein. It has ferroxidase activity oxidizing Fe(2+) to Fe(3+) without releasing radical oxygen species. It is involved in iron transport across the cell membrane. Copper ions provide a large number of enzymatic activites. Oxidizes highly toxic ferrous ions to the ferric state for further incorporation onto apo-transferrins, catalyzes Cu(+) oxidation and promotes the oxidation of biogenic amines such as norepinephrin and serotonin. Provides Cu(2+) ions for the ascorbate-mediated deaminase degradation of the heparan sulfate chains of GPC1. Has glutathione peroxidase-like activity, can remove both hydrogen peroxide and lipid hydroperoxide in the presence of thiols. Also shows NO-oxidase and NO2 synthase activities that determine endocrine NO homeostasis. The chain is Ceruloplasmin (Cp) from Mus musculus (Mouse).